The sequence spans 678 residues: NADPH--cytochrome P450 reductase (678 aa).

The residue at position 2 (Gly2) is an N-acetylglycine. Residues 2–22 (GDSHEDTSATMPEAVAEEVSL) are Lumenal-facing. A helical membrane pass occupies residues 23–43 (FSTTDMVLFSLIVGVLTYWFI). At 44–678 (FRKKKEEIPE…KGRYSLDVWS (635 aa)) the chain is on the cytoplasmic side. Residues 80–224 (IIVFYGSQTG…DFITWREQFW (145 aa)) enclose the Flavodoxin-like domain. FMN contacts are provided by residues 86 to 91 (SQTGTA), 138 to 141 (ATYG), 173 to 182 (LGNKTYEHFN), and Asp208. Residues 279 to 521 (KNPFLAAVTA…FVRKSQFRLP (243 aa)) form the FAD-binding FR-type domain. Arg298 provides a ligand contact to NADP(+). FAD-binding positions include Arg424, 454–457 (RYYS), 472–474 (CAV), Tyr478, and 488–491 (GVAT). NADP(+) contacts are provided by residues Thr535, 596 to 597 (SR), 602 to 606 (KVYVQ), and Asp639. Trp677 is an FAD binding site.

This sequence belongs to the NADPH--cytochrome P450 reductase family. In the N-terminal section; belongs to the flavodoxin family. The protein in the C-terminal section; belongs to the flavoprotein pyridine nucleotide cytochrome reductase family. The cofactor is FAD. It depends on FMN as a cofactor.

The protein localises to the endoplasmic reticulum membrane. The catalysed reaction is 2 oxidized [cytochrome P450] + NADPH = 2 reduced [cytochrome P450] + NADP(+) + H(+). Its function is as follows. This enzyme is required for electron transfer from NADP to cytochrome P450 in microsomes. It can also provide electron transfer to heme oxygenase and cytochrome B5. The chain is NADPH--cytochrome P450 reductase from Rattus norvegicus (Rat).